An 89-amino-acid polypeptide reads, in one-letter code: Protein S100-A6 (89 aa).

2 consecutive EF-hand domains span residues 12 to 47 (LVAI…IGAK) and 48 to 83 (LQDA…LALI). Positions 28 and 33 each coordinate Ca(2+). Residue K40 is modified to N6-acetyllysine. At K47 the chain carries N6-acetyllysine; alternate. N6-succinyllysine; alternate is present on K47. Ca(2+) contacts are provided by D61, N63, D65, E67, and E72.

The protein belongs to the S-100 family. Homodimer; head to tail assembly of 2 subunits. Interacts with CACYBP in a calcium-dependent manner. Interacts with ANXA2 and ANXA11 (via N-terminus). Interacts with SUGT1. Interacts with TP53; has higher affinity for TP53 that is phosphorylated on its N-terminal domain, and lower affinity for TP53 that is phosphorylated on its C-terminal domain. Interacts with tropomyosin. Interacts with FKBP4. Interacts with PPP5C (via TPR repeats); the interaction is calcium-dependent and modulates PPP5C activity. Interacts with TPPP; this interaction inhibits TPPP dimerization.

It localises to the nucleus envelope. Its subcellular location is the cytoplasm. The protein localises to the cell membrane. In terms of biological role, may function as calcium sensor and modulator, contributing to cellular calcium signaling. May function by interacting with other proteins, such as TPR-containing proteins, and indirectly play a role in many physiological processes such as the reorganization of the actin cytoskeleton and in cell motility. Binds 2 calcium ions. Calcium binding is cooperative. This Rattus norvegicus (Rat) protein is Protein S100-A6 (S100a6).